The following is a 190-amino-acid chain: ATP synthase subunit delta (190 aa).

It belongs to the ATPase delta chain family. In terms of assembly, F-type ATPases have 2 components, F(1) - the catalytic core - and F(0) - the membrane proton channel. F(1) has five subunits: alpha(3), beta(3), gamma(1), delta(1), epsilon(1). F(0) has three main subunits: a(1), b(2) and c(10-14). The alpha and beta chains form an alternating ring which encloses part of the gamma chain. F(1) is attached to F(0) by a central stalk formed by the gamma and epsilon chains, while a peripheral stalk is formed by the delta and b chains.

It is found in the cell inner membrane. In terms of biological role, f(1)F(0) ATP synthase produces ATP from ADP in the presence of a proton or sodium gradient. F-type ATPases consist of two structural domains, F(1) containing the extramembraneous catalytic core and F(0) containing the membrane proton channel, linked together by a central stalk and a peripheral stalk. During catalysis, ATP synthesis in the catalytic domain of F(1) is coupled via a rotary mechanism of the central stalk subunits to proton translocation. Functionally, this protein is part of the stalk that links CF(0) to CF(1). It either transmits conformational changes from CF(0) to CF(1) or is implicated in proton conduction. The protein is ATP synthase subunit delta of Petrotoga mobilis (strain DSM 10674 / SJ95).